Here is a 1487-residue protein sequence, read N- to C-terminus: Collagen alpha-1(II) chain (1487 aa).

The signal sequence occupies residues 1 to 25; it reads MIRLGAPQTLVLLTLLVAAVLRCQG. The propeptide at 26-181 is N-terminal propeptide; that stretch reads QDVQEAGSCV…PPGLGGNFAA (156 aa). The region spanning 32–90 is the VWFC domain; the sequence is GSCVQDGQRYNDKDVWKPEPCRICVCDTGTVLCDDIICEDVKDCLSPEIPFGECCPICP. The tract at residues 97–1237 is disordered; that stretch reads SGQPGPKGQK…PREKGPDPLQ (1141 aa). Basic and acidic residues-rich tracts occupy residues 105 to 116 and 133 to 154; these read QKGEPGDIKDIV and PRGD…RDGE. Positions 158-173 are enriched in pro residues; sequence PGNPGPPGPPGPPGPP. The residue at position 190 (lysine 190) is a 5-hydroxylysine. The O-linked (Gal...) hydroxylysine glycan is linked to lysine 190. The interval 201-1214 is triple-helical region; it reads GPMGPMGPRG…PGPPGPPGPP (1014 aa). A compositionally biased stretch (pro residues) spans 208–217; the sequence is PRGPPGPAGA. Low complexity predominate over residues 218–239; the sequence is PGPQGFQGNPGEPGEPGVSGPM. Residues 241 to 250 are compositionally biased toward pro residues; the sequence is PRGPPGPPGK. Positions 251-265 are enriched in basic and acidic residues; the sequence is PGDDGEAGKPGKAGE. 5-hydroxylysine is present on residues lysine 287, lysine 299, and lysine 308. Residues lysine 287, lysine 299, and lysine 308 are each glycosylated (O-linked (Gal...) hydroxylysine). 2 stretches are compositionally biased toward low complexity: residues 310-320 and 335-350; these read ESGSPGENGSP and TGPA…DGQP. A compositionally biased stretch (gly residues) spans 360 to 369; that stretch reads GPAGGPGFPG. Low complexity-rich tracts occupy residues 370–382 and 391–431; these read APGA…PTGA and PRGE…AGAP. Lysine 374 carries the post-translational modification 5-hydroxylysine. Lysine 374 is a glycosylation site (O-linked (Gal...) hydroxylysine). Over residues 433-442 the composition is skewed to pro residues; it reads FPGPRGPPGP. Lysine 608 and lysine 620 each carry 5-hydroxylysine. O-linked (Gal...) hydroxylysine glycans are attached at residues lysine 608 and lysine 620. 2 stretches are compositionally biased toward low complexity: residues 622–631 and 656–667; these read LPGAPGLRGL and QGAPGPSGFQGL. 2 positions are modified to 4-hydroxyproline: proline 659 and proline 668. Proline 670 bears the 3-hydroxyproline mark. 4-hydroxyproline is present on residues proline 671 and proline 674. Residues 764–775 are compositionally biased toward basic and acidic residues; it reads KGDRGDVGEKGP. Composition is skewed to low complexity over residues 833 to 848 and 877 to 913; these read AGFA…PGAK and PTGV…SNGN. Proline 907 carries the post-translational modification 3-hydroxyproline. A 4-hydroxyproline mark is found at proline 908, proline 914, and proline 920. Residues 1069 to 1079 are compositionally biased toward pro residues; it reads APGPPGSPGPA. Basic and acidic residues predominate over residues 1115-1129; the sequence is RGDKGEAGEPGERGL. The residue at position 1130 (lysine 1130) is a 5-hydroxylysine. An O-linked (Gal...) hydroxylysine glycan is attached at lysine 1130. At proline 1144 the chain carries 3-hydroxyproline. The span at 1148-1157 shows a compositional bias: low complexity; the sequence is SGDQGASGPA. At proline 1181 the chain carries 4-hydroxyproline. Proline 1186 carries the post-translational modification 3-hydroxyproline. Proline 1187 carries the post-translational modification 4-hydroxyproline. Residues 1199–1216 are compositionally biased toward pro residues; that stretch reads AGPPGNPGPPGPPGPPGP. The residue at position 1201 (proline 1201) is a 3-hydroxyproline. Proline 1202 and proline 1205 each carry 4-hydroxyproline. Proline 1207 carries the 3-hydroxyproline modification. Proline 1208 and proline 1211 each carry 4-hydroxyproline. Position 1213 is a 3-hydroxyproline (proline 1213). Proline 1214 is subject to 4-hydroxyproline. Residues 1215–1241 form a nonhelical region (C-terminal) region; that stretch reads GPGIDMSAFAGLGPREKGPDPLQYMRA. One can recognise a Fibrillar collagen NC1 domain in the interval 1253–1487; the sequence is AEVDATLKSL…GVDIGPVCFL (235 aa). 3 disulfide bridges follow: cysteine 1283–cysteine 1315, cysteine 1323–cysteine 1485, and cysteine 1393–cysteine 1438. The Ca(2+) site is built by aspartate 1301, asparagine 1303, glutamine 1304, cysteine 1306, and aspartate 1309. Asparagine 1388 is a glycosylation site (N-linked (GlcNAc...) asparagine).

It belongs to the fibrillar collagen family. Homotrimers of alpha 1(II) chains. The N-telopeptide is covalently linked to the helical COL2 region of alpha 1(IX), alpha 2(IX) and alpha 3(IX) chain. The C-telopeptide is covalently linked to an another site in the helical region of alpha 3(IX) COL2. In terms of processing, contains mostly 4-hydroxyproline. Prolines at the third position of the tripeptide repeating unit (G-X-P) are 4-hydroxylated in some or all of the chains. Post-translationally, contains 3-hydroxyproline at a few sites. This modification occurs on the first proline residue in the sequence motif Gly-Pro-Hyp, where Hyp is 4-hydroxyproline. Lysine residues at the third position of the tripeptide repeating unit (G-X-Y) are 5-hydroxylated in some or all of the chains. In terms of processing, O-glycosylated on hydroxylated lysine residues. The O-linked glycan consists of a Glc-Gal disaccharide. As to expression, isoform 2 is highly expressed in juvenile chondrocyte and low in fetal chondrocyte.

The protein resides in the secreted. It is found in the extracellular space. Its subcellular location is the extracellular matrix. Functionally, type II collagen is specific for cartilaginous tissues. It is essential for the normal embryonic development of the skeleton, for linear growth and for the ability of cartilage to resist compressive forces. This is Collagen alpha-1(II) chain from Homo sapiens (Human).